A 275-amino-acid chain; its full sequence is NH(3)-dependent NAD(+) synthetase (275 aa).

An ATP-binding site is contributed by 46-53 (GISGGQDS). Residue Asp-52 participates in Mg(2+) binding. Arg-140 is a binding site for deamido-NAD(+). Thr-160 contacts ATP. Residue Glu-165 participates in Mg(2+) binding. Residues Lys-173 and Asp-180 each coordinate deamido-NAD(+). 2 residues coordinate ATP: Lys-189 and Thr-211. Deamido-NAD(+) is bound at residue 260-261 (HK).

The protein belongs to the NAD synthetase family. Homodimer.

The enzyme catalyses deamido-NAD(+) + NH4(+) + ATP = AMP + diphosphate + NAD(+) + H(+). The protein operates within cofactor biosynthesis; NAD(+) biosynthesis; NAD(+) from deamido-NAD(+) (ammonia route): step 1/1. Catalyzes the ATP-dependent amidation of deamido-NAD to form NAD. Uses ammonia as a nitrogen source. The protein is NH(3)-dependent NAD(+) synthetase of Escherichia coli O45:K1 (strain S88 / ExPEC).